Reading from the N-terminus, the 631-residue chain is ESX-3 secretion system protein EccA3 (631 aa).

Residue glycine 385–threonine 392 participates in ATP binding.

This sequence belongs to the CbxX/CfxQ family. In terms of assembly, part of the ESX-3 / type VII secretion system (T7SS), which is composed of cytosolic and membrane components.

The protein resides in the cytoplasm. Its function is as follows. Part of the ESX-3 specialized secretion system, which is important for iron and zinc uptake or homeostasis. EccA3 exhibits ATPase activity and may provide energy for the export of ESX-3 substrates. In Mycobacterium tuberculosis (strain CDC 1551 / Oshkosh), this protein is ESX-3 secretion system protein EccA3.